Consider the following 166-residue polypeptide: uncharacterized protein (166 aa).

117–124 serves as a coordination point for ATP; sequence AAKSGGKT.

This is an uncharacterized protein from Mycoplasma pneumoniae (strain ATCC 29342 / M129 / Subtype 1) (Mycoplasmoides pneumoniae).